Here is a 364-residue protein sequence, read N- to C-terminus: Fructose-bisphosphate aldolase A (364 aa).

Position 5 is a phosphotyrosine (tyrosine 5). Position 9 is a phosphothreonine (threonine 9). 2 positions are modified to phosphoserine: serine 36 and serine 39. At lysine 42 the chain carries N6-acetyllysine; alternate. Lysine 42 participates in a covalent cross-link: Glycyl lysine isopeptide (Lys-Gly) (interchain with G-Cter in SUMO1); alternate. Residue lysine 42 forms a Glycyl lysine isopeptide (Lys-Gly) (interchain with G-Cter in SUMO2); alternate linkage. Arginine 43 lines the beta-D-fructose 1,6-bisphosphate pocket. Residue serine 46 is modified to Phosphoserine. N6-(2-hydroxyisobutyryl)lysine is present on lysine 99. N6-acetyllysine is present on lysine 108. Lysine 111 is modified (N6-acetyllysine; alternate). An N6-malonyllysine; alternate modification is found at lysine 111. Serine 132 bears the Phosphoserine mark. Residue lysine 147 is modified to N6-(2-hydroxyisobutyryl)lysine. The active-site Proton acceptor is the glutamate 188. The Schiff-base intermediate with dihydroxyacetone-P role is filled by lysine 230. Serine 272 carries the post-translational modification Phosphoserine. Residues 272 to 274 (SGG), serine 301, and arginine 304 contribute to the beta-D-fructose 1,6-bisphosphate site. Lysine 312 carries the N6-malonyllysine modification. At lysine 330 the chain carries N6-acetyllysine.

It belongs to the class I fructose-bisphosphate aldolase family. In terms of assembly, homotetramer. Interacts with SNX9 and WAS. Interacts with FBP2; the interaction blocks FBP2 inhibition by physiological concentrations of AMP and reduces inhibition by Ca(2+).

The protein localises to the cytoplasm. It localises to the myofibril. Its subcellular location is the sarcomere. It is found in the i band. The protein resides in the m line. The enzyme catalyses beta-D-fructose 1,6-bisphosphate = D-glyceraldehyde 3-phosphate + dihydroxyacetone phosphate. The protein operates within carbohydrate degradation; glycolysis; D-glyceraldehyde 3-phosphate and glycerone phosphate from D-glucose: step 4/4. Catalyzes the reversible conversion of beta-D-fructose 1,6-bisphosphate (FBP) into two triose phosphate and plays a key role in glycolysis and gluconeogenesis. In addition, may also function as scaffolding protein. This is Fructose-bisphosphate aldolase A from Homo sapiens (Human).